The chain runs to 605 residues: UvrABC system protein C (605 aa).

Residues 14–92 (QSCGVYKMVG…IKSLKPLYNI (79 aa)) enclose the GIY-YIG domain. A UVR domain is found at 202 to 237 (KEVKEQLLFTMRKCSSEENYELAAIYRDRVKFLEQI).

This sequence belongs to the UvrC family. In terms of assembly, interacts with UvrB in an incision complex.

It localises to the cytoplasm. Functionally, the UvrABC repair system catalyzes the recognition and processing of DNA lesions. UvrC both incises the 5' and 3' sides of the lesion. The N-terminal half is responsible for the 3' incision and the C-terminal half is responsible for the 5' incision. The chain is UvrABC system protein C from Wolbachia sp. subsp. Drosophila simulans (strain wRi).